We begin with the raw amino-acid sequence, 472 residues long: MGKTLYEKVWEAHEVRKLKNGQSQLFIDLHLLHEVTSPQAFGMLKDLGLRVRYPHRTFATVDHIVPTHDRTEPFQDPLAQSMLEALRANTREHGITFFDLGSGNQGIVHVIGPQLGLTQPGMTIACGDSHTSTHGAFGAVAFGIGTSQVRDVLATQTLAAQKLKVRRINVEGRLAPGVYAKDVILHIIRHLGVKGGLGYAYEYGGSAVEAMDMESRMTLCNMSIEGGARIGYVNPDETTFQYLEGRPYVPKGSEWEEAKRRWLAWRSDPDASYDDVVTFRAEEIAPTVTWGITPGQAIPIDGRIPLLEELPEEERPVAEEALAYMGFRPGQPIKGVPIQVAFIGSCTNARLSDLREVARYLKGHKVKKGVRALVVPGSEWVARKAEEEGIAEVFREAGFEWRMPGCSMCLAMNPDRLEGDELCASSSNRNYKGRMGSPRGRTVLMSPLMVAAAAVAGEIADAREVFGLAGVR.

[4Fe-4S] cluster is bound by residues cysteine 346, cysteine 406, and cysteine 409.

Belongs to the aconitase/IPM isomerase family. LeuC type 1 subfamily. In terms of assembly, heterodimer of LeuC and LeuD. [4Fe-4S] cluster serves as cofactor.

The enzyme catalyses (2R,3S)-3-isopropylmalate = (2S)-2-isopropylmalate. It participates in amino-acid biosynthesis; L-leucine biosynthesis; L-leucine from 3-methyl-2-oxobutanoate: step 2/4. Catalyzes the isomerization between 2-isopropylmalate and 3-isopropylmalate, via the formation of 2-isopropylmaleate. This chain is 3-isopropylmalate dehydratase large subunit, found in Thermus thermophilus (strain ATCC BAA-163 / DSM 7039 / HB27).